Reading from the N-terminus, the 295-residue chain is Probable xyloglucan endotransglucosylase/hydrolase protein (295 aa).

The N-terminal stretch at methionine 1 to cysteine 21 is a signal peptide. The region spanning glycine 22–tyrosine 220 is the GH16 domain. The Nucleophile role is filled by glutamate 106. Catalysis depends on glutamate 110, which acts as the Proton donor. Residue glutamate 110 participates in xyloglucan binding. Asparagine 114 carries N-linked (GlcNAc...) asparagine glycosylation. Residues glutamine 123–asparagine 125, aspartate 133–glutamate 135, aspartate 199–tryptophan 200, and glycine 204 contribute to the xyloglucan site. Intrachain disulfides connect cysteine 228–cysteine 239 and cysteine 276–cysteine 289. Residue arginine 281 participates in xyloglucan binding.

Belongs to the glycosyl hydrolase 16 family. XTH group 1 subfamily. Contains at least one intrachain disulfide bond essential for its enzymatic activity.

It is found in the secreted. The protein resides in the cell wall. It localises to the extracellular space. The protein localises to the apoplast. The enzyme catalyses breaks a beta-(1-&gt;4) bond in the backbone of a xyloglucan and transfers the xyloglucanyl segment on to O-4 of the non-reducing terminal glucose residue of an acceptor, which can be a xyloglucan or an oligosaccharide of xyloglucan.. Its function is as follows. Catalyzes xyloglucan endohydrolysis (XEH) and/or endotransglycosylation (XET). Cleaves and religates xyloglucan polymers, an essential constituent of the primary cell wall, and thereby participates in cell wall construction of growing tissues. This is Probable xyloglucan endotransglucosylase/hydrolase protein (XTH) from Nicotiana tabacum (Common tobacco).